The following is a 348-amino-acid chain: Probable dual-specificity RNA methyltransferase RlmN (348 aa).

Glu95 acts as the Proton acceptor in catalysis. A Radical SAM core domain is found at 101–335; that stretch reads SGNRLTICVS…VSLRASRGLD (235 aa). A disulfide bridge connects residues Cys108 and Cys340. [4Fe-4S] cluster contacts are provided by Cys115, Cys119, and Cys122. S-adenosyl-L-methionine-binding positions include 162–163, Ser192, 221–223, and Asn297; these read GE and SLH. The active-site S-methylcysteine intermediate is the Cys340.

The protein belongs to the radical SAM superfamily. RlmN family. Requires [4Fe-4S] cluster as cofactor.

Its subcellular location is the cytoplasm. It catalyses the reaction adenosine(2503) in 23S rRNA + 2 reduced [2Fe-2S]-[ferredoxin] + 2 S-adenosyl-L-methionine = 2-methyladenosine(2503) in 23S rRNA + 5'-deoxyadenosine + L-methionine + 2 oxidized [2Fe-2S]-[ferredoxin] + S-adenosyl-L-homocysteine. The catalysed reaction is adenosine(37) in tRNA + 2 reduced [2Fe-2S]-[ferredoxin] + 2 S-adenosyl-L-methionine = 2-methyladenosine(37) in tRNA + 5'-deoxyadenosine + L-methionine + 2 oxidized [2Fe-2S]-[ferredoxin] + S-adenosyl-L-homocysteine. Specifically methylates position 2 of adenine 2503 in 23S rRNA and position 2 of adenine 37 in tRNAs. The sequence is that of Probable dual-specificity RNA methyltransferase RlmN from Prochlorococcus marinus (strain SARG / CCMP1375 / SS120).